The primary structure comprises 96 residues: Mitochondrial import inner membrane translocase subunit Tim13-B (96 aa).

The Twin CX3C motif motif lies at 47 to 70 (CFRKCIGKPGGSLDNSEQKCVAMC). 2 cysteine pairs are disulfide-bonded: C47/C70 and C51/C66.

It belongs to the small Tim family. As to quaternary structure, heterohexamer; composed of 3 copies of TIMM8 (TIMM8A or TIMM8B) and 3 copies of TIMM13, named soluble 70 kDa complex. Associates with the TIM22 complex, whose core is composed of TIMM22.

The protein resides in the mitochondrion inner membrane. In terms of biological role, mitochondrial intermembrane chaperone that participates in the import and insertion of some multi-pass transmembrane proteins into the mitochondrial inner membrane. Also required for the transfer of beta-barrel precursors from the TOM complex to the sorting and assembly machinery (SAM complex) of the outer membrane. Acts as a chaperone-like protein that protects the hydrophobic precursors from aggregation and guide them through the mitochondrial intermembrane space. The TIMM8-TIMM13 complex mediates the import of some proteins while the predominant TIMM9-TIMM10 70 kDa complex mediates the import of much more proteins. The protein is Mitochondrial import inner membrane translocase subunit Tim13-B (timm13-b) of Xenopus laevis (African clawed frog).